Reading from the N-terminus, the 103-residue chain is Small ribosomal subunit protein uS10 (103 aa).

The protein belongs to the universal ribosomal protein uS10 family. As to quaternary structure, part of the 30S ribosomal subunit.

Functionally, involved in the binding of tRNA to the ribosomes. This Ralstonia pickettii (strain 12J) protein is Small ribosomal subunit protein uS10.